A 446-amino-acid polypeptide reads, in one-letter code: FAD-dependent monooxygenase eupB (446 aa).

The chain crosses the membrane as a helical span at residues 10–30; that stretch reads EPHIAIVGGGIVGVILTLGLL. N-linked (GlcNAc...) asparagine glycosylation occurs at Asn-33. Residues Glu-40, Ala-53, and Arg-125 each coordinate FAD. Active-site residues include Arg-206 and Tyr-239. Asn-243 carries an N-linked (GlcNAc...) asparagine glycan. Asp-322 and Ala-335 together coordinate FAD. N-linked (GlcNAc...) asparagine glycosylation occurs at Asn-395.

It belongs to the paxM FAD-dependent monooxygenase family. It depends on FAD as a cofactor.

Its subcellular location is the membrane. The protein operates within secondary metabolite biosynthesis; terpenoid biosynthesis. FAD-dependent monooxygenase; part of the gene cluster that mediates the biosynthesis of eupenifeldin, a bistropolone meroterpenoid that acts as an antitumor agent. The first step of eupenifeldin biosynthesis is the biosynthesis of 3-methylorcinaldehyde performed by the non-reducing polyketide synthase eupA. Oxidative dearomatization of 3-methylorcinaldehyde likely catalyzed by the FAD-dependent monooxygenase eupB is followed by oxidative ring expansion by the 2-oxoglutarate-dependent dioxygenase eupC to provide the first tropolone metabolite, tropolone stipitaldehyde. In parallel, generation of sesquiterpene alpha-humulene from farnesylpyrophosphate (FPP) is catalyzed by the terpene cyclase eupE. The cytochrome P450 monooxygenase eupD then hydroxylates humulene to humulenol. The putative Diels-Alderase eupF probably catalyzes the formation of the tropolone-humulene skeleton by linking humulenol and the polyketide moiety. The short-chain dehydrogenase/reductase eupG and the flavin-dependent monooxygenase eupH are also essential for eupenifeldin biosynthesis and are likely the additional decorating enzymes of the tropolone-humulene skeleton to produce final eupenifeldin or derivatives. In Phoma sp, this protein is FAD-dependent monooxygenase eupB.